Reading from the N-terminus, the 60-residue chain is SLWQFGKMINYVMGESGVLQYLSYGCYCGLGGQGQPTDATDRCCFVHDCCYGKVTGCDPK.

The Ca(2+) site is built by Tyr27, Gly29, and Gly31. Residues Cys28 and Cys44 are joined by a disulfide bond. His47 is a catalytic residue. Position 48 (Asp48) interacts with Ca(2+).

Belongs to the phospholipase A2 family. Group II subfamily. D49 sub-subfamily. Monomer. The cofactor is Ca(2+). In terms of tissue distribution, expressed by the venom gland.

It localises to the secreted. It catalyses the reaction a 1,2-diacyl-sn-glycero-3-phosphocholine + H2O = a 1-acyl-sn-glycero-3-phosphocholine + a fatty acid + H(+). Snake venom phospholipase A2 (PLA2) that exhibits an indirect hemolytic activity, a low myotoxicity, and induces edema. In addition, this enzyme has been shown to induce the release of some pro- and anti-inflammatory cytokines from human PBMC (IL12B, TNF-alpha, IL1B and IL6 but not variation has been observed for IL-8 and IL-10). PLA2 catalyzes the calcium-dependent hydrolysis of the 2-acyl groups in 3-sn-phosphoglycerides. This Bothrops leucurus (Whitetail lancehead) protein is Acidic phospholipase A2.